The chain runs to 128 residues: Putative protein SEM1, isoform 2 (128 aa).

The segment covering 22–32 (KHGIKRGRRPS) has biased composition (basic residues). Residues 22–42 (KHGIKRGRRPSIRSPAQRARG) are disordered.

This Homo sapiens (Human) protein is Putative protein SEM1, isoform 2.